The primary structure comprises 118 residues: Large ribosomal subunit protein bL20 (118 aa).

It belongs to the bacterial ribosomal protein bL20 family.

Binds directly to 23S ribosomal RNA and is necessary for the in vitro assembly process of the 50S ribosomal subunit. It is not involved in the protein synthesizing functions of that subunit. This Psychromonas ingrahamii (strain DSM 17664 / CCUG 51855 / 37) protein is Large ribosomal subunit protein bL20.